A 331-amino-acid chain; its full sequence is Ferredoxin--NADP reductase (331 aa).

Residues Glu-34, Gln-42, Tyr-47, Val-87, Phe-120, Asp-285, and Thr-325 each contribute to the FAD site.

It belongs to the ferredoxin--NADP reductase type 2 family. In terms of assembly, homodimer. It depends on FAD as a cofactor.

It carries out the reaction 2 reduced [2Fe-2S]-[ferredoxin] + NADP(+) + H(+) = 2 oxidized [2Fe-2S]-[ferredoxin] + NADPH. This chain is Ferredoxin--NADP reductase, found in Levilactobacillus brevis (strain ATCC 367 / BCRC 12310 / CIP 105137 / JCM 1170 / LMG 11437 / NCIMB 947 / NCTC 947) (Lactobacillus brevis).